The sequence spans 168 residues: Photosystem I assembly protein Ycf3 (168 aa).

TPR repeat units lie at residues 35-68 (AFTY…EIDP), 72-105 (SYIL…NPFL), and 120-153 (GEQA…TPGN).

This sequence belongs to the Ycf3 family.

The protein resides in the plastid. It localises to the chloroplast thylakoid membrane. Essential for the assembly of the photosystem I (PSI) complex. May act as a chaperone-like factor to guide the assembly of the PSI subunits. This is Photosystem I assembly protein Ycf3 from Ranunculus macranthus (Large buttercup).